The following is a 210-amino-acid chain: Scoloptoxin SSD976 (210 aa).

A signal peptide spans 1 to 23; sequence MNILLSSTLFVLLMFQIIGSGMG.

Contains 3 disulfide bonds. As to expression, expressed by the venom gland.

It localises to the secreted. In terms of biological role, voltage-gated calcium channel inhibitor. The sequence is that of Scoloptoxin SSD976 from Scolopendra dehaani (Thai centipede).